A 220-amino-acid polypeptide reads, in one-letter code: Large ribosomal subunit protein bL9 (220 aa).

Low complexity predominate over residues 167–184 (AAAEVEQAEDVAAAEQQD). The disordered stretch occupies residues 167-220 (AAAEVEQAEDVAAAEQQDSSPVDDHADDADGATGGEGRDEGAGDASDGEEMPST).

Belongs to the bacterial ribosomal protein bL9 family.

In terms of biological role, binds to the 23S rRNA. The sequence is that of Large ribosomal subunit protein bL9 from Anaplasma marginale (strain St. Maries).